Consider the following 453-residue polypeptide: Serine incorporator 1 (453 aa).

The N-myristoyl glycine moiety is linked to residue Gly2. Residues 2–39 (GSVLGLCSVASWIPCLCGSAPCLLCRCCPSGNNSTVTR) lie on the Cytoplasmic side of the membrane. Residues 40–60 (LIYALFLLVGVCVACVMLIPG) form a helical membrane-spanning segment. The Lumenal portion of the chain corresponds to 61-88 (MEEQLNKIPGFCENEKGVVPCNILVGYK). The chain crosses the membrane as a helical span at residues 89 to 109 (AVYRLCFGLAMFYLLLSLLMI). Residues 110–123 (KVKSSSDPRAAVHN) are Cytoplasmic-facing. Residues 124–144 (GFWFFKFATAVAIIIGAFFIP) traverse the membrane as a helical segment. At 145 to 151 (EGTFTTV) the chain is on the lumenal side. Residues 152 to 172 (WFYVGMAGAFCFILIQLVLLI) traverse the membrane as a helical segment. At 173–197 (DFAHSWNESWVEKMEEGNSRCWYAA) the chain is on the cytoplasmic side. A helical membrane pass occupies residues 198 to 218 (LLSATALNYLLSLVAVVLFFV). Residues 219 to 231 (YYTHPASCAENKA) lie on the Lumenal side of the membrane. The chain crosses the membrane as a helical span at residues 232–252 (FISVNMLLCIGASVMSILPKI). Over 253–259 (QESQPRS) the chain is Cytoplasmic. The helical transmembrane segment at 260 to 280 (GLLQSSVITVYTMYLTWSAMT) threads the bilayer. Topologically, residues 281–309 (NEPETNCNPSLLSIIGFNTTRPIPKDGQS) are lumenal. Residues 310–330 (VQWWHPQGIIGLVLFLLCVFY) traverse the membrane as a helical segment. Residues 331-387 (SSIRTSNNSQVNKLTLTSDESTLIEDGNGRSDGSLDDGDGIHRAVDNERDGVTYSYS) lie on the Cytoplasmic side of the membrane. At Ser351 the chain carries Phosphoserine. At Thr352 the chain carries Phosphothreonine. Residues Ser361 and Ser364 each carry the phosphoserine modification. The helical transmembrane segment at 388–408 (FFHFMLFLASLYIMMTLTNWY) threads the bilayer. Topologically, residues 409–426 (RYEPSREMKSQWTAVWVK) are lumenal. A helical membrane pass occupies residues 427–447 (ISSSWIGLVLYVWTLVAPLVL). The Cytoplasmic portion of the chain corresponds to 448 to 453 (TNRDFD).

It belongs to the TDE1 family. In terms of assembly, interacts with SPTLC1. In terms of tissue distribution, highly expressed in the neuronal populations such as Purkinje cells in the cerebellum, brainstem and spinal motor neurons, locus coeruleus and raphe nuclei.

Its subcellular location is the endoplasmic reticulum membrane. In terms of biological role, enhances the incorporation of serine into phosphatidylserine and sphingolipids. In Mus musculus (Mouse), this protein is Serine incorporator 1 (Serinc1).